A 332-amino-acid polypeptide reads, in one-letter code: Probable farnesyl diphosphate synthase (332 aa).

Isopentenyl diphosphate is bound by residues K75, R78, and H107. Mg(2+)-binding residues include D114 and D120. R125 serves as a coordination point for (2E)-geranyl diphosphate. R126 contributes to the isopentenyl diphosphate binding site. 4 residues coordinate (2E)-geranyl diphosphate: K208, S209, Q250, and K267.

Belongs to the FPP/GGPP synthase family. The cofactor is Mg(2+).

Its subcellular location is the cytoplasm. It carries out the reaction isopentenyl diphosphate + (2E)-geranyl diphosphate = (2E,6E)-farnesyl diphosphate + diphosphate. In Bradyrhizobium diazoefficiens (strain JCM 10833 / BCRC 13528 / IAM 13628 / NBRC 14792 / USDA 110), this protein is Probable farnesyl diphosphate synthase (fppS).